A 382-amino-acid chain; its full sequence is Flap endonuclease 1 (382 aa).

The tract at residues 1 to 104 is N-domain; the sequence is MGIKGLSQVI…GELEKRSERR (104 aa). Residue Asp-34 participates in Mg(2+) binding. 2 residues coordinate DNA: Arg-47 and Arg-70. Residues Asp-86, Glu-158, Glu-160, Asp-179, and Asp-181 each coordinate Mg(2+). The tract at residues 122-253 is I-domain; that stretch reads EAEKFERRLV…KKAVELIRQH (132 aa). Glu-158 lines the DNA pocket. Residues Gly-231 and Asp-233 each contribute to the DNA site. Asp-233 contributes to the Mg(2+) binding site. The tract at residues 336 to 344 is interaction with PCNA; the sequence is TQGRIDSFF. The segment at 358–382 is disordered; that stretch reads KRKAEEAEKAKKGAKKGGPPKKRAK. Residues 359–368 show a composition bias toward basic and acidic residues; the sequence is RKAEEAEKAK. Residues 369-382 are compositionally biased toward basic residues; that stretch reads KGAKKGGPPKKRAK.

The protein belongs to the XPG/RAD2 endonuclease family. FEN1 subfamily. As to quaternary structure, interacts with PCNA. Three molecules of crn-1 bind to one PCNA trimer with each molecule binding to one PCNA monomer. PCNA stimulates the nuclease activity without altering cleavage specificity. Interacts with cps-6. The cofactor is Mg(2+). Phosphorylated. Phosphorylation upon DNA damage induces relocalization to the nuclear plasma.

The protein localises to the nucleus. The protein resides in the nucleolus. Its subcellular location is the nucleoplasm. It is found in the mitochondrion. Its function is as follows. Structure-specific nuclease with 5'-flap endonuclease and 5'-3' exonuclease activities involved in DNA replication and repair. During DNA replication, cleaves the 5'-overhanging flap structure that is generated by displacement synthesis when DNA polymerase encounters the 5'-end of a downstream Okazaki fragment. It enters the flap from the 5'-end and then tracks to cleave the flap base, leaving a nick for ligation. Also involved in the long patch base excision repair (LP-BER) pathway, by cleaving within the apurinic/apyrimidinic (AP) site-terminated flap. Acts as a genome stabilization factor that prevents flaps from equilibrating into structures that lead to duplications and deletions. Also possesses 5'-3' exonuclease activity on nicked or gapped double-stranded DNA, and exhibits RNase H activity. Also involved in replication and repair of rDNA and in repairing mitochondrial DNA. Can associate and cooperate with cps-6 to promote stepwise DNA fragmentation, utilizing the endonuclease activity of cps-6 and both of its own 5'-3' exonuclease activity and gap-dependent endonuclease activity. May play a critical role in switching the state of cells from DNA replication/repair to DNA degradation during apoptosis. This chain is Flap endonuclease 1, found in Caenorhabditis elegans.